Here is a 912-residue protein sequence, read N- to C-terminus: Protein translocase subunit SecA (912 aa).

Residues Gln-87, 105–109, and Asp-512 each bind ATP; that span reads GEGKT. Cys-896, Cys-898, Cys-907, and His-908 together coordinate Zn(2+).

The protein belongs to the SecA family. Monomer and homodimer. Part of the essential Sec protein translocation apparatus which comprises SecA, SecYEG and auxiliary proteins SecDF-YajC and YidC. The cofactor is Zn(2+).

The protein resides in the cell inner membrane. Its subcellular location is the cytoplasm. The enzyme catalyses ATP + H2O + cellular proteinSide 1 = ADP + phosphate + cellular proteinSide 2.. Part of the Sec protein translocase complex. Interacts with the SecYEG preprotein conducting channel. Has a central role in coupling the hydrolysis of ATP to the transfer of proteins into and across the cell membrane, serving both as a receptor for the preprotein-SecB complex and as an ATP-driven molecular motor driving the stepwise translocation of polypeptide chains across the membrane. The protein is Protein translocase subunit SecA of Pseudomonas fluorescens (strain Pf0-1).